Reading from the N-terminus, the 88-residue chain is MVSKEQKLALIKEFGGDEKNTGLAEVQIAILTAEISNLTEHLKMHKKDIPTRRTLLKKVAQRRHFLDYLVKKDVNRYKEVIGKLGIRK.

Belongs to the universal ribosomal protein uS15 family. In terms of assembly, part of the 30S ribosomal subunit. Forms a bridge to the 50S subunit in the 70S ribosome, contacting the 23S rRNA.

In terms of biological role, one of the primary rRNA binding proteins, it binds directly to 16S rRNA where it helps nucleate assembly of the platform of the 30S subunit by binding and bridging several RNA helices of the 16S rRNA. Functionally, forms an intersubunit bridge (bridge B4) with the 23S rRNA of the 50S subunit in the ribosome. The sequence is that of Small ribosomal subunit protein uS15 from Mycoplasma mycoides subsp. mycoides SC (strain CCUG 32753 / NCTC 10114 / PG1).